Reading from the N-terminus, the 474-residue chain is Trichothecene 3-O-acetyltransferase (474 aa).

Belongs to the trichothecene 3-O-acetyltransferase family.

Functionally, trichothecene 3-O-acetyltransferase involved in self-protection against trichothecenes, mycotoxins acting as eukaryotic protein synthesis inhibitors. Its existence is surprising in a non-trichothecene producer organism which needs no self-protection again endogenic trichothecenes. The persistence of this non-essential gene may be due to a selective advantage that it may confer, like a resistance to exogenic trichothecenes. This Saccharomyces cerevisiae (strain ATCC 204508 / S288c) (Baker's yeast) protein is Trichothecene 3-O-acetyltransferase (AYT1).